A 361-amino-acid chain; its full sequence is Putative F-box protein At1g33010 (361 aa).

The F-box domain maps to glycine 4–proline 50. The tract at residues serine 308 to glutamine 339 is disordered.

The sequence is that of Putative F-box protein At1g33010 from Arabidopsis thaliana (Mouse-ear cress).